A 514-amino-acid polypeptide reads, in one-letter code: Peptide chain release factor 3 (514 aa).

Residues 8 to 268 (KKRRTFAIIS…TFLEFAPEPH (261 aa)) enclose the tr-type G domain. Residues 17–24 (SHPDAGKT), 85–89 (DTPGH), and 139–142 (NKLD) contribute to the GTP site.

This sequence belongs to the TRAFAC class translation factor GTPase superfamily. Classic translation factor GTPase family. PrfC subfamily.

Its subcellular location is the cytoplasm. Increases the formation of ribosomal termination complexes and stimulates activities of RF-1 and RF-2. It binds guanine nucleotides and has strong preference for UGA stop codons. It may interact directly with the ribosome. The stimulation of RF-1 and RF-2 is significantly reduced by GTP and GDP, but not by GMP. This is Peptide chain release factor 3 from Streptococcus pyogenes serotype M2 (strain MGAS10270).